The sequence spans 131 residues: MSWQTYVDDHLMCDIEGQHLTAAAVIGHDGSVWAQSATFPQFKPEEVAAIIKDFDEPGSLAPTGLHLGGTKYMVIQGEPGAVIRGKKGAGGITVKKTGQALIFGIYDEPLTPGQCNIIVERLGDYLLEQGL.

A disulfide bond links Cys13 and Cys115. The Involved in PIP2 interaction signature appears at 81–97 (AVIRGKKGAGGITVKKT). Thr111 carries the phosphothreonine modification.

It belongs to the profilin family. Occurs in many kinds of cells as a complex with monomeric actin in a 1:1 ratio. In terms of processing, phosphorylated by MAP kinases.

It is found in the cytoplasm. The protein localises to the cytoskeleton. Its function is as follows. Binds to actin and affects the structure of the cytoskeleton. At high concentrations, profilin prevents the polymerization of actin, whereas it enhances it at low concentrations. This Olea europaea (Common olive) protein is Profilin-4.